Reading from the N-terminus, the 1342-residue chain is DNA-directed RNA polymerase subunit beta (1342 aa).

N6-acetyllysine is present on residues K1022 and K1200.

This sequence belongs to the RNA polymerase beta chain family. The RNAP catalytic core consists of 2 alpha, 1 beta, 1 beta' and 1 omega subunit. When a sigma factor is associated with the core the holoenzyme is formed, which can initiate transcription.

It carries out the reaction RNA(n) + a ribonucleoside 5'-triphosphate = RNA(n+1) + diphosphate. Its function is as follows. DNA-dependent RNA polymerase catalyzes the transcription of DNA into RNA using the four ribonucleoside triphosphates as substrates. In Escherichia coli O139:H28 (strain E24377A / ETEC), this protein is DNA-directed RNA polymerase subunit beta.